Here is a 411-residue protein sequence, read N- to C-terminus: RING-H2 finger protein ATL65 (411 aa).

Positions 1 to 32 (MRFVAPPPRSGDNSPSPSPSSGISEEILSRSS) are disordered. Low complexity predominate over residues 10-21 (SGDNSPSPSPSS). The helical transmembrane segment at 36–56 (LEFSPPLIAMVVVLAAAFLFV) threads the bilayer. An RING-type; atypical zinc finger spans residues 156-198 (CAVCLLEFEEGDYVRTLPLCFHAFHLECIDEWLRSHPNCPLCR).

The protein belongs to the RING-type zinc finger family. ATL subfamily.

Its subcellular location is the membrane. The catalysed reaction is S-ubiquitinyl-[E2 ubiquitin-conjugating enzyme]-L-cysteine + [acceptor protein]-L-lysine = [E2 ubiquitin-conjugating enzyme]-L-cysteine + N(6)-ubiquitinyl-[acceptor protein]-L-lysine.. Its pathway is protein modification; protein ubiquitination. This is RING-H2 finger protein ATL65 (ATL65) from Arabidopsis thaliana (Mouse-ear cress).